Here is a 478-residue protein sequence, read N- to C-terminus: Putative response regulator NtrX-like (478 aa).

In terms of domain architecture, Response regulatory spans 5–121; it reads DVLIVDDEED…KLVILLKRAC (117 aa). 4-aspartylphosphate is present on Asp-54. Residues 143 to 372 enclose the Sigma-54 factor interaction domain; sequence LVGNSTITLK…LRNVVEWTLI (230 aa). ATP contacts are provided by residues 171–178 and 235–244; these read GKVGSGKE and ANNGTLYIDE.

In terms of biological role, member of the two-component regulatory system RBE_0312/RBE_0470. The chain is Putative response regulator NtrX-like from Rickettsia bellii (strain RML369-C).